A 326-amino-acid polypeptide reads, in one-letter code: Ribonuclease Z (326 aa).

Zn(2+)-binding residues include His-62, His-64, Asp-66, His-67, His-140, Asp-211, and His-269. Asp-66 acts as the Proton acceptor in catalysis.

It belongs to the RNase Z family. As to quaternary structure, homodimer. Zn(2+) serves as cofactor.

It carries out the reaction Endonucleolytic cleavage of RNA, removing extra 3' nucleotides from tRNA precursor, generating 3' termini of tRNAs. A 3'-hydroxy group is left at the tRNA terminus and a 5'-phosphoryl group is left at the trailer molecule.. In terms of biological role, zinc phosphodiesterase, which displays some tRNA 3'-processing endonuclease activity. Probably involved in tRNA maturation, by removing a 3'-trailer from precursor tRNA. This Synechocystis sp. (strain ATCC 27184 / PCC 6803 / Kazusa) protein is Ribonuclease Z.